Reading from the N-terminus, the 451-residue chain is Sensor histidine kinase CssS (451 aa).

Residues 1–9 (MKNKPLAFQ) lie on the Cytoplasmic side of the membrane. The chain crosses the membrane as a helical span at residues 10–30 (IWVVISGILLAISILLLVLFS). Residues 31-165 (NTLRDFFTNE…RDDLAYTLFK (135 aa)) are Extracellular-facing. The helical transmembrane segment at 166-186 (QLLFIIAVVILLSWIPAIWLA) threads the bilayer. The 53-residue stretch at 187–239 (KYLSRPLVSFEKHVKRISEQDWDDPVKVDRKDEIGKLGHTIEEMRQKLVQKDE) folds into the HAMP domain. Residues 187-451 (KYLSRPLVSF…GVTYRIAVPK (265 aa)) are Cytoplasmic-facing. The region spanning 247 to 451 (NISHDLKTPV…GVTYRIAVPK (205 aa)) is the Histidine kinase domain. The residue at position 250 (His250) is a Phosphohistidine; by autocatalysis.

Its subcellular location is the cell membrane. It catalyses the reaction ATP + protein L-histidine = ADP + protein N-phospho-L-histidine.. Functionally, member of the two-component regulatory system CssS/CssR required to control the cellular response to secretion stress. Required for the transcription of htrA. Could detect misfolded proteins at the membrane-cell wall interface and then activate CssR by phosphorylation. The protein is Sensor histidine kinase CssS (cssS) of Bacillus subtilis (strain 168).